The primary structure comprises 126 residues: uncharacterized protein (126 aa).

2 consecutive transmembrane segments (helical) span residues 21–43 (LIVW…RIFS) and 48–70 (SVTF…LLLL).

The protein resides in the membrane. This is an uncharacterized protein from Saccharomyces cerevisiae (strain ATCC 204508 / S288c) (Baker's yeast).